Here is a 329-residue protein sequence, read N- to C-terminus: Mitochondrial nuclease (329 aa).

Catalysis depends on His-138, which acts as the Proton acceptor. A Mg(2+)-binding site is contributed by Asn-170.

Belongs to the DNA/RNA non-specific endonuclease family. In terms of assembly, homodimer. Mn(2+) serves as cofactor. It depends on Mg(2+) as a cofactor.

It localises to the mitochondrion inner membrane. In terms of biological role, this enzyme has both RNase and DNase activity. The sequence is that of Mitochondrial nuclease (NUC1) from Saccharomyces cerevisiae (strain ATCC 204508 / S288c) (Baker's yeast).